We begin with the raw amino-acid sequence, 262 residues long: uncharacterized protein (262 aa).

6 consecutive transmembrane segments (helical) span residues 21-41 (ILIT…VGKF), 94-114 (IVSN…LAYL), 139-159 (LLIL…GVNL), 164-184 (LIAV…AVVV), 205-225 (IVIL…LEPI), and 240-260 (LLAA…SMLF).

The protein localises to the cell membrane. This is an uncharacterized protein from Methanocaldococcus jannaschii (strain ATCC 43067 / DSM 2661 / JAL-1 / JCM 10045 / NBRC 100440) (Methanococcus jannaschii).